Reading from the N-terminus, the 84-residue chain is Large ribosomal subunit protein uL23 (84 aa).

Belongs to the universal ribosomal protein uL23 family. In terms of assembly, part of the 50S ribosomal subunit. Contacts protein L29.

Functionally, binds to 23S rRNA. One of the proteins that surrounds the polypeptide exit tunnel on the outside of the ribosome. This Thermoplasma acidophilum (strain ATCC 25905 / DSM 1728 / JCM 9062 / NBRC 15155 / AMRC-C165) protein is Large ribosomal subunit protein uL23.